We begin with the raw amino-acid sequence, 517 residues long: uncharacterized protein (517 aa).

Disordered regions lie at residues 16–148 (KDES…TITK), 156–175 (VNKE…NTTT), and 216–351 (KLEK…EENE). Low complexity predominate over residues 48-75 (NNNNNNNNTTTTNNNTNNSNTSTSNNSK). The segment covering 84-112 (FDDDDDDGDEEDEEEEDDDDDDDDDDDET) has biased composition (acidic residues). Over residues 127 to 143 (QPQPQPQPQPQPQPPIK) the composition is skewed to pro residues. The segment covering 236-252 (VSSTLSNSFDPNIIHNQ) has biased composition (polar residues). A compositionally biased stretch (pro residues) spans 254-266 (SPPPPPISIPIPL). Composition is skewed to low complexity over residues 271 to 320 (NLNN…NSNI) and 327 to 347 (SSSM…SNNN). The stretch at 340-452 (DNSSSNNNEE…HQNQQNSMNN (113 aa)) forms a coiled coil.

It belongs to the ENTR1 family.

This is an uncharacterized protein from Dictyostelium discoideum (Social amoeba).